Consider the following 263-residue polypeptide: Esterase mokD (263 aa).

Residues Ser134, Asp208, and His236 each act as charge relay system in the active site.

Belongs to the LovG family.

The catalysed reaction is dihydromonacolin L-[lovastatin nonaketide synthase] + H2O = holo-[lovastatin nonaketide synthase] + dihydromonacolin L carboxylate + H(+). It functions in the pathway polyketide biosynthesis; lovastatin biosynthesis. Esterase; part of the gene cluster that mediates the biosynthesis of monakolin K, also known as lovastatin, and which acts as a potent competitive inhibitor of HMG-CoA reductase. Monakolin K biosynthesis is performed in two stages. The first stage is catalyzed by the nonaketide synthase mokA, which belongs to type I polyketide synthases and catalyzes the iterative nine-step formation of the polyketide. This PKS stage completed by the action of dehydrogenase mokE, which catalyzes the NADPH-dependent reduction of the unsaturated tetra-, penta- and heptaketide intermediates that arise during the mokA-mediated biosynthesis of the nonaketide chain and leads to dihydromonacolin L. Covalently bound dihydromonacolin L is released from mokA by the mokD esterase. Conversion of dihydromonacolin L into monacolin L and then monacolin J is subsequently performed with the participation of molecular oxygen and P450 monoogygenase mokC. Finally, mokF performs the conversion of monacoline J to monacoline K through the addition of the side-chain diketide moiety (2R)-2-methylbutanoate produced by the diketide synthase mokB. This Monascus pilosus (Red mold) protein is Esterase mokD.